A 597-amino-acid chain; its full sequence is Cytosolic Fe-S cluster assembly factor NAR1 (597 aa).

Position 20 (cysteine 20) interacts with [4Fe-4S] cluster. The disordered stretch occupies residues 25–46; sequence ESLPQKESQSENPYEVTKEDKV. Positions 61, 64, 67, 208, and 263 each coordinate [4Fe-4S] cluster. The disordered stretch occupies residues 422–448; sequence VSRLPGAKPQAVTSSANRRQPMSRNAA. A compositionally biased stretch (polar residues) spans 432-444; the sequence is AVTSSANRRQPMS. [4Fe-4S] cluster-binding residues include cysteine 464 and cysteine 468.

The protein belongs to the NARF family.

In terms of biological role, component of the cytosolic Fe/S protein assembly machinery. Required for maturation of extramitochondrial Fe/S proteins. May play a role in the transfer of pre-assembled Fe/S clusters to target apoproteins. The chain is Cytosolic Fe-S cluster assembly factor NAR1 (NAR1) from Neosartorya fischeri (strain ATCC 1020 / DSM 3700 / CBS 544.65 / FGSC A1164 / JCM 1740 / NRRL 181 / WB 181) (Aspergillus fischerianus).